Here is a 159-residue protein sequence, read N- to C-terminus: Phosphopantetheine adenylyltransferase (159 aa).

Serine 8 provides a ligand contact to substrate. ATP contacts are provided by residues 8–9 (SF) and histidine 16. Residues lysine 40, leucine 72, and arginine 86 each coordinate substrate. ATP is bound by residues 87-89 (GLR), glutamate 97, and 122-128 (YSFISSS).

This sequence belongs to the bacterial CoaD family. Homohexamer. It depends on Mg(2+) as a cofactor.

It localises to the cytoplasm. It carries out the reaction (R)-4'-phosphopantetheine + ATP + H(+) = 3'-dephospho-CoA + diphosphate. It participates in cofactor biosynthesis; coenzyme A biosynthesis; CoA from (R)-pantothenate: step 4/5. Functionally, reversibly transfers an adenylyl group from ATP to 4'-phosphopantetheine, yielding dephospho-CoA (dPCoA) and pyrophosphate. The chain is Phosphopantetheine adenylyltransferase from Thermosipho melanesiensis (strain DSM 12029 / CIP 104789 / BI429).